The primary structure comprises 213 residues: Protein Syd (213 aa).

Belongs to the Syd family.

It localises to the cell inner membrane. Interacts with the SecY protein in vivo. May bind preferentially to an uncomplexed state of SecY, thus functioning either as a chelating agent for excess SecY in the cell or as a regulatory factor that negatively controls the translocase function. This is Protein Syd from Shewanella pealeana (strain ATCC 700345 / ANG-SQ1).